The sequence spans 152 residues: MKQALLVKVLDKRLGNEIPLPAYATDGSAGLDLRACLAEPVTLQPGETTLIPTGMAIHLSDPGLAAMLLPRSGLGHKHGIVLGNLVGLIDSDYQGEVMVSCWNRGNEAFTISVGERIAQMVIVPVVQVGFEIVDDFDDSSRGAGGFGSTGTK.

Residues 71 to 73, Asn-84, 88 to 90, and Met-98 each bind substrate; these read RSG and LID.

The protein belongs to the dUTPase family. Requires Mg(2+) as cofactor.

The catalysed reaction is dUTP + H2O = dUMP + diphosphate + H(+). It functions in the pathway pyrimidine metabolism; dUMP biosynthesis; dUMP from dCTP (dUTP route): step 2/2. In terms of biological role, this enzyme is involved in nucleotide metabolism: it produces dUMP, the immediate precursor of thymidine nucleotides and it decreases the intracellular concentration of dUTP so that uracil cannot be incorporated into DNA. In Hahella chejuensis (strain KCTC 2396), this protein is Deoxyuridine 5'-triphosphate nucleotidohydrolase.